Reading from the N-terminus, the 542-residue chain is GMP synthase [glutamine-hydrolyzing] (542 aa).

A Glutamine amidotransferase type-1 domain is found at 28-218; that stretch reads IIVILDFGSQ…VYHICHCEPT (191 aa). The active-site Nucleophile is C105. Active-site residues include H192 and E194. The GMPS ATP-PPase domain maps to 219-417; that stretch reads WTTAAFIEES…IGLPEEIVRR (199 aa). An ATP-binding site is contributed by 246–252; it reads SGGVDSS.

Homodimer.

It carries out the reaction XMP + L-glutamine + ATP + H2O = GMP + L-glutamate + AMP + diphosphate + 2 H(+). Its pathway is purine metabolism; GMP biosynthesis; GMP from XMP (L-Gln route): step 1/1. Its function is as follows. Catalyzes the synthesis of GMP from XMP. In Synechocystis sp. (strain ATCC 27184 / PCC 6803 / Kazusa), this protein is GMP synthase [glutamine-hydrolyzing] (guaA).